We begin with the raw amino-acid sequence, 270 residues long: Molybdenum-pterin-binding protein MopB (270 aa).

Mop domains are found at residues 131–197 (RTSA…LLAG) and 203–269 (RLSV…ILAL).

It belongs to the ModE family.

The chain is Molybdenum-pterin-binding protein MopB (mopB) from Rhodobacter capsulatus (Rhodopseudomonas capsulata).